Reading from the N-terminus, the 290-residue chain is uncharacterized protein (290 aa).

Its subcellular location is the cell membrane. The protein resides in the membrane raft. This is an uncharacterized protein from Bacillus subtilis (strain 168).